The primary structure comprises 323 residues: Beta-ketoacyl-[acyl-carrier-protein] synthase III (323 aa).

Residues cysteine 114 and histidine 250 contribute to the active site. The segment at 251 to 255 is ACP-binding; the sequence is QANRR. Residue asparagine 280 is part of the active site.

It belongs to the thiolase-like superfamily. FabH family. Homodimer.

The protein localises to the cytoplasm. The enzyme catalyses malonyl-[ACP] + acetyl-CoA + H(+) = 3-oxobutanoyl-[ACP] + CO2 + CoA. It functions in the pathway lipid metabolism; fatty acid biosynthesis. Catalyzes the condensation reaction of fatty acid synthesis by the addition to an acyl acceptor of two carbons from malonyl-ACP. Catalyzes the first condensation reaction which initiates fatty acid synthesis and may therefore play a role in governing the total rate of fatty acid production. Possesses both acetoacetyl-ACP synthase and acetyl transacylase activities. Its substrate specificity determines the biosynthesis of branched-chain and/or straight-chain of fatty acids. The protein is Beta-ketoacyl-[acyl-carrier-protein] synthase III of Rhodospirillum centenum (strain ATCC 51521 / SW).